A 1246-amino-acid polypeptide reads, in one-letter code: Putative helicase L115 (1246 aa).

The disordered stretch occupies residues 1–21 (MSKTITKKVNKKTKKSTKINP). A Helicase ATP-binding domain is found at 872–1030 (AKFTDGYHGF…YYMLKMLQTG (159 aa)). 885–892 (SDVGSGKT) contacts ATP.

This is Putative helicase L115 from Acanthamoeba polyphaga (Amoeba).